Consider the following 282-residue polypeptide: Sirohydrochlorin cobaltochelatase CbiKC (282 aa).

The active-site Proton acceptor is His-166. Residues His-166 and His-228 each coordinate Co(2+).

Belongs to the CbiK family.

It localises to the cytoplasm. It carries out the reaction Co-sirohydrochlorin + 2 H(+) = sirohydrochlorin + Co(2+). The enzyme catalyses siroheme + 2 H(+) = sirohydrochlorin + Fe(2+). The protein operates within cofactor biosynthesis; adenosylcobalamin biosynthesis; cob(II)yrinate a,c-diamide from sirohydrochlorin (anaerobic route): step 1/10. It participates in porphyrin-containing compound metabolism; siroheme biosynthesis; siroheme from sirohydrochlorin: step 1/1. Functionally, catalyzes the insertion of Co(2+) into sirohydrochlorin as part of the anaerobic pathway to cobalamin biosynthesis. To a lesser extent, is also able to insert Fe(2+) into sirohydrochlorin, yielding siroheme. This Nitratidesulfovibrio vulgaris (strain ATCC 29579 / DSM 644 / CCUG 34227 / NCIMB 8303 / VKM B-1760 / Hildenborough) (Desulfovibrio vulgaris) protein is Sirohydrochlorin cobaltochelatase CbiKC (cbiKc).